The chain runs to 207 residues: Small ribosomal subunit protein uS4c (207 aa).

Residues Met-92–Glu-156 enclose the S4 RNA-binding domain.

Belongs to the universal ribosomal protein uS4 family. In terms of assembly, part of the 30S ribosomal subunit. Contacts protein S5. The interaction surface between S4 and S5 is involved in control of translational fidelity.

It localises to the plastid. The protein localises to the chloroplast. One of the primary rRNA binding proteins, it binds directly to 16S rRNA where it nucleates assembly of the body of the 30S subunit. Its function is as follows. With S5 and S12 plays an important role in translational accuracy. This chain is Small ribosomal subunit protein uS4c (rps4), found in Equisetum arvense (Field horsetail).